A 95-amino-acid chain; its full sequence is Aspartyl/glutamyl-tRNA(Asn/Gln) amidotransferase subunit C (95 aa).

The protein belongs to the GatC family. As to quaternary structure, heterotrimer of A, B and C subunits.

It carries out the reaction L-glutamyl-tRNA(Gln) + L-glutamine + ATP + H2O = L-glutaminyl-tRNA(Gln) + L-glutamate + ADP + phosphate + H(+). It catalyses the reaction L-aspartyl-tRNA(Asn) + L-glutamine + ATP + H2O = L-asparaginyl-tRNA(Asn) + L-glutamate + ADP + phosphate + 2 H(+). Functionally, allows the formation of correctly charged Asn-tRNA(Asn) or Gln-tRNA(Gln) through the transamidation of misacylated Asp-tRNA(Asn) or Glu-tRNA(Gln) in organisms which lack either or both of asparaginyl-tRNA or glutaminyl-tRNA synthetases. The reaction takes place in the presence of glutamine and ATP through an activated phospho-Asp-tRNA(Asn) or phospho-Glu-tRNA(Gln). This is Aspartyl/glutamyl-tRNA(Asn/Gln) amidotransferase subunit C from Bradyrhizobium sp. (strain BTAi1 / ATCC BAA-1182).